A 462-amino-acid chain; its full sequence is MAVMKFTWRSIIPRCSKGIEEPEAEAEAEPETKKQDSKQGSFSRLAMIDLSYPSSRFTEDLSTSLAGSNLYVFTLEELKVITQCFSSANFLGEGGFGPVHKGFIDDNLRPGLEAQPVAVKLLDLEGLQGHREWLTEVVFLAQLSHPHLVKLIGYCCEDEHRLLVYEYMPRGSLENQLFAKYSVPLPWSTRMKIALGAAKGLAYLHEAEKPVIYRDFKASNILLDSDYSAKLSDFGLAKDGPEGDKTHVSTRVMGTRGYAAPEYIMTGHLTAMSDVYSFGVVLLELLTGRRSLDKSRSPREQNLAEWARPMLNESRRLARIMDPKLEGQYSETGARKAAALAYQCLSHRAKQRPKMSDVVNILEPLLDYEETSVGTFVYTVPTHQNGGSPPKDDTDTKECEAKTELKKENGDHHNRHHHRRSHKSRDGHRHRNKSSSQSSVHSENYTSKQTLENGSNEECNID.

One can recognise a Protein kinase domain in the interval 85–366 (FSSANFLGEG…DVVNILEPLL (282 aa)). ATP contacts are provided by residues 91 to 99 (LGEGGFGPV) and Lys-120. Residues Tyr-165 and Tyr-167 each carry the phosphotyrosine modification. The active-site Proton acceptor is the Asp-215.

The protein belongs to the protein kinase superfamily. Ser/Thr protein kinase family. As to quaternary structure, interacts with the Verticillium dahliae elicitor EPD1 (AC G2WWH6). In terms of processing, phosphorylated at Tyr-165 and Tyr-167 in the presence of pathogen-associated molecular patterns (PAMPs); this triggers the expression of pathogenesis-related genes (e.g. PR5 and PR16). In terms of tissue distribution, mostly expressed in roots and, to a lesser extent, in leaves.

The protein localises to the cell membrane. It catalyses the reaction L-seryl-[protein] + ATP = O-phospho-L-seryl-[protein] + ADP + H(+). The enzyme catalyses L-threonyl-[protein] + ATP = O-phospho-L-threonyl-[protein] + ADP + H(+). Required for pathogen-associated molecular pattern (PAMP, e.g. chitin and flg22)-triggered immunity (PTI) involving reactive oxygen species (ROS) accumulation and triggering plant defense, including defense-related gene expression (e.g. PR1 and LOX). Ensures specific recognition of the EPD1 effector of Verticillium dahliae, resulting in a hypersensitive response known as effector-triggered immunity (ETI), characterized by the activation of programmed cell death to limit infection by the pathogen. Priming plants with the incompatible pathogen V.dahliae leads to an increased resistance to compatible pathogens, as a result of systemic acquired resistance (SAR). The protein is EPD1-interacting receptor-like cytoplasmic serine/threonine-protein kinase 5A of Gossypium barbadense (Sea Island cotton).